A 111-amino-acid chain; its full sequence is Latartoxin-2b (111 aa).

The signal sequence occupies residues 1–19 (MKVLVIIALCFFILQTALS). Positions 20-43 (EDKYESFESYVEDLKSGNMKGEAR) are cleaved as a propeptide — removed in mature form. The Processing quadruplet motif signature appears at 40–43 (GEAR). Disulfide bonds link C45–C62, C52–C73, C61–C87, C75–C85, and C78–C99. V110 carries the valine amide modification.

This sequence belongs to the neurotoxin 19 (CSTX) family. 11 (latartoxin) subfamily. In terms of processing, contains 5 disulfide bonds. Cleavage of the propeptide depends on the processing quadruplet motif (XXXR, with at least one of X being E). In terms of tissue distribution, expressed by the venom gland.

The protein localises to the secreted. Functionally, insect toxin. This Lachesana tarabaevi (Spider) protein is Latartoxin-2b.